We begin with the raw amino-acid sequence, 469 residues long: Uronate isomerase (469 aa).

The protein belongs to the metallo-dependent hydrolases superfamily. Uronate isomerase family.

The enzyme catalyses D-glucuronate = D-fructuronate. It catalyses the reaction aldehydo-D-galacturonate = keto-D-tagaturonate. It participates in carbohydrate metabolism; pentose and glucuronate interconversion. This is Uronate isomerase from Yersinia enterocolitica serotype O:8 / biotype 1B (strain NCTC 13174 / 8081).